The chain runs to 572 residues: Proline--tRNA ligase (572 aa).

This sequence belongs to the class-II aminoacyl-tRNA synthetase family. ProS type 1 subfamily. Homodimer.

It is found in the cytoplasm. It catalyses the reaction tRNA(Pro) + L-proline + ATP = L-prolyl-tRNA(Pro) + AMP + diphosphate. In terms of biological role, catalyzes the attachment of proline to tRNA(Pro) in a two-step reaction: proline is first activated by ATP to form Pro-AMP and then transferred to the acceptor end of tRNA(Pro). As ProRS can inadvertently accommodate and process non-cognate amino acids such as alanine and cysteine, to avoid such errors it has two additional distinct editing activities against alanine. One activity is designated as 'pretransfer' editing and involves the tRNA(Pro)-independent hydrolysis of activated Ala-AMP. The other activity is designated 'posttransfer' editing and involves deacylation of mischarged Ala-tRNA(Pro). The misacylated Cys-tRNA(Pro) is not edited by ProRS. This Shigella dysenteriae serotype 1 (strain Sd197) protein is Proline--tRNA ligase.